The following is a 247-amino-acid chain: Probable transcriptional regulatory protein Hhal_2210 (247 aa).

It belongs to the TACO1 family.

Its subcellular location is the cytoplasm. This chain is Probable transcriptional regulatory protein Hhal_2210, found in Halorhodospira halophila (strain DSM 244 / SL1) (Ectothiorhodospira halophila (strain DSM 244 / SL1)).